The sequence spans 154 residues: Endoribonuclease YbeY (154 aa).

Residues histidine 120, histidine 124, and histidine 130 each coordinate Zn(2+).

The protein belongs to the endoribonuclease YbeY family. Zn(2+) is required as a cofactor.

Its subcellular location is the cytoplasm. Its function is as follows. Single strand-specific metallo-endoribonuclease involved in late-stage 70S ribosome quality control and in maturation of the 3' terminus of the 16S rRNA. The protein is Endoribonuclease YbeY of Oceanobacillus iheyensis (strain DSM 14371 / CIP 107618 / JCM 11309 / KCTC 3954 / HTE831).